A 492-amino-acid polypeptide reads, in one-letter code: Glutamyl-tRNA(Gln) amidotransferase subunit A (492 aa).

Catalysis depends on charge relay system residues Lys78 and Ser158. Ser182 serves as the catalytic Acyl-ester intermediate.

Belongs to the amidase family. GatA subfamily. As to quaternary structure, heterotrimer of A, B and C subunits.

The catalysed reaction is L-glutamyl-tRNA(Gln) + L-glutamine + ATP + H2O = L-glutaminyl-tRNA(Gln) + L-glutamate + ADP + phosphate + H(+). Functionally, allows the formation of correctly charged Gln-tRNA(Gln) through the transamidation of misacylated Glu-tRNA(Gln) in organisms which lack glutaminyl-tRNA synthetase. The reaction takes place in the presence of glutamine and ATP through an activated gamma-phospho-Glu-tRNA(Gln). The sequence is that of Glutamyl-tRNA(Gln) amidotransferase subunit A from Rhodopseudomonas palustris (strain ATCC BAA-98 / CGA009).